A 627-amino-acid polypeptide reads, in one-letter code: (-)-alpha-terpineol synthase, chloroplastic (627 aa).

The N-terminal 52 residues, 1-52, are a transit peptide targeting the chloroplast; sequence MDLISVLPSASKSCVCLHKPLSSSTHKLKPFCKTIRILVMPRRWEFARPSMS. 3 residues coordinate Mg(2+): D378, D382, and D530. Positions 378-382 match the DDXXD motif motif; it reads DDMYD.

Belongs to the terpene synthase family. Tpsd subfamily. Mg(2+) is required as a cofactor. Requires Mn(2+) as cofactor.

It localises to the plastid. It is found in the chloroplast. The catalysed reaction is (2E)-geranyl diphosphate + H2O = (S)-alpha-terpineol + diphosphate. The protein operates within terpene metabolism; oleoresin biosynthesis. Its function is as follows. Involved in defensive oleoresin formation in conifers in response to insect attack or other injury. Involved in monoterpene (C10) olefins biosynthesis. Produces 57.3% alpha-terpineol (15.1% (+)/84.9% (-)), 27.6% limonene (25.2% (+)/74.8% (-)), 8% terpinolene, 4.7% beta-pinene (14.8% (+)/85.2% (-)), 1.3% alpha-pinene (100% (+)) and 1.1% myrcene. This is (-)-alpha-terpineol synthase, chloroplastic (PT10) from Pinus taeda (Loblolly pine).